Reading from the N-terminus, the 191-residue chain is MAEQVALSRTQVCGILREELYQGDAFHQSDTHIFIIMGASGDLAKKKIYPTIEPASFQRLNTHMNSLHHGAQANRLFYLALPPIVYEAVTKNIKETCMSQDVMQNHLLQMLCLVAMEKPASTNSDDVRDEKDELQEAWRIFTPLLHHIEREKTQPIPYVYGSRGPPEADELMKRVGFQYEGTYKWVNPHKL.

Residue alanine 2 is modified to N-acetylalanine. Phosphoserine is present on serine 8. Threonine 10 is modified (phosphothreonine). NADP(+)-binding positions include glycine 38–lysine 45 and tyrosine 86. Aspartate 101 lines the D-glucose 6-phosphate pocket. Histidine 106 acts as the Proton acceptor in catalysis. Position 163 (arginine 163) interacts with NADP(+). Residue lysine 173 is modified to N6-acetyllysine. Residues tyrosine 179 and tryptophan 185 each coordinate NADP(+). The residue at position 179 (tyrosine 179) is a Phosphotyrosine.

This sequence belongs to the glucose-6-phosphate dehydrogenase family. As to quaternary structure, homotetramer; dimer of dimers. Interacts with SIRT2; the interaction is enhanced by H(2)O(2) treatment. Forms a ternary complex with ALDOB and TP53; this interaction is direct. ALDOB stabilizes the complex inhibiting G6PD activity and keeping oxidative pentose phosphate metabolism in check. Post-translationally, acetylated by ELP3; acetylation inhibits its homodimerization and enzyme activity. Deacetylated by SIRT2; deacetylation stimulates its enzyme activity.

The protein resides in the cytoplasm. Its subcellular location is the cytosol. The protein localises to the membrane. The enzyme catalyses D-glucose 6-phosphate + NADP(+) = 6-phospho-D-glucono-1,5-lactone + NADPH + H(+). Its pathway is carbohydrate degradation; pentose phosphate pathway; D-ribulose 5-phosphate from D-glucose 6-phosphate (oxidative stage): step 1/3. Cytosolic glucose-6-phosphate dehydrogenase that catalyzes the first and rate-limiting step of the oxidative branch within the pentose phosphate pathway/shunt, an alternative route to glycolysis for the dissimilation of carbohydrates and a major source of reducing power and metabolic intermediates for fatty acid and nucleic acid biosynthetic processes. In Didelphis virginiana (North American opossum), this protein is Glucose-6-phosphate 1-dehydrogenase (G6PD).